Reading from the N-terminus, the 242-residue chain is uncharacterized protein (242 aa).

A run of 2 helical transmembrane segments spans residues 4–24 (NYQV…YYVV) and 34–54 (LLFG…WLFG). N73 carries N-linked (GlcNAc...) asparagine; by host glycosylation. Helical transmembrane passes span 74 to 94 (YTIV…VIGY), 106 to 126 (VLTV…YGGF), and 162 to 182 (LDVF…FVMY). Residue N185 is glycosylated (N-linked (GlcNAc...) asparagine; by host). A run of 2 helical transmembrane segments spans residues 189–209 (VIGL…APTL) and 217–237 (CLLS…STGI).

It is found in the membrane. This is an uncharacterized protein from Acanthamoeba polyphaga mimivirus (APMV).